The following is a 333-amino-acid chain: Phosphoribosylformylglycinamidine cyclo-ligase (333 aa).

Belongs to the AIR synthase family.

Its subcellular location is the cytoplasm. It catalyses the reaction 2-formamido-N(1)-(5-O-phospho-beta-D-ribosyl)acetamidine + ATP = 5-amino-1-(5-phospho-beta-D-ribosyl)imidazole + ADP + phosphate + H(+). It participates in purine metabolism; IMP biosynthesis via de novo pathway; 5-amino-1-(5-phospho-D-ribosyl)imidazole from N(2)-formyl-N(1)-(5-phospho-D-ribosyl)glycinamide: step 2/2. In Methanosarcina mazei (strain ATCC BAA-159 / DSM 3647 / Goe1 / Go1 / JCM 11833 / OCM 88) (Methanosarcina frisia), this protein is Phosphoribosylformylglycinamidine cyclo-ligase.